Reading from the N-terminus, the 280-residue chain is Merozoite surface protein 2 (280 aa).

The first 20 residues, 1–20 (MKVIKTLSIINFFIFVTFNI), serve as a signal peptide directing secretion. N-linked (GlcNAc...) asparagine glycosylation is found at Asn-22 and Asn-36. A polymorphic region region spans residues 44-206 (ANEGSNTKSV…PQTAENENPA (163 aa)). The segment at 47–242 (GSNTKSVGAN…SQKECTDGNK (196 aa)) is disordered. The 5 X 12 AA tandem repeats of P-P-I-T-T-T-E-S-N-S-R-S stretch occupies residues 51 to 74 (KSVGANAPKADTIASGSQSSTNSA). Over residues 64–98 (ASGSQSSTNSASTSTTNNGESQTTTPTAADTPTAT) the composition is skewed to low complexity. Residues 99–149 (ESNSRSPPITTTESNSRSPPITTTESNSRSPPITTTESNSRSPPITTTESN) are compositionally biased toward polar residues. 4 repeat units span residues 105-116 (PPITTTESNSRS), 117-128 (PPITTTESNSRS), 129-140 (PPITTTESNSRS), and 141-152 (PPITTTESNSRS). Residues 150–163 (SRSPPITTTESSSS) are compositionally biased toward low complexity. The stretch at 153 to 160 (PPITTTES) is one 5; partial repeat. The N-linked (GlcNAc...) asparagine glycan is linked to Asn-168. Over residues 170–182 (TDGKGEESEKQNE) the composition is skewed to basic and acidic residues. Asn-184 and Asn-229 each carry an N-linked (GlcNAc...) asparagine glycan. Residues 233–242 (SQKECTDGNK) show a composition bias toward basic and acidic residues. A disulfide bond links Cys-237 and Cys-245. N-linked (GlcNAc...) asparagine glycosylation is found at Asn-253 and Asn-254. Asn-254 carries the GPI-anchor amidated asparagine lipid modification. A propeptide spans 255-280 (SSNIASINKFVVLISATLVLSFAIFI) (removed in mature form).

It localises to the cell membrane. May play a role in the merozoite attachment to the erythrocyte. This is Merozoite surface protein 2 from Plasmodium falciparum (isolate K1 / Thailand).